A 395-amino-acid chain; its full sequence is LIM/homeobox protein Lhx3 (395 aa).

LIM zinc-binding domains lie at 28 to 78 (CAGC…CKDD) and 87 to 141 (CAAC…CKAD). Positions 154 to 213 (AKRPRTTITAKQLETLKNAYNNSPKPARHVREQLSSETGLDMRVVQVWFQNRRAKEKRLK) form a DNA-binding region, homeobox. 2 disordered regions span residues 208 to 304 (KEKR…QDQY) and 363 to 383 (GPSS…PVSP). Over residues 257-278 (DEPSMSEMNHSNGIYNSLNDSS) the composition is skewed to polar residues.

In terms of assembly, interacts with ldb1 and with the N-terminus of rnf12. As to expression, in dorsal regions at neural tube and tailbud stages and in adults predominantly in the pituitary gland and weakly in the eye and brain.

It localises to the nucleus. Functionally, transcription factor. May be involved in the specification and maintenance of differentiation of distinct neuronal and neuroendocrine tissues. Early marker for the pituitary and pineal lineages, it may be involved in specifying these lineages. The polypeptide is LIM/homeobox protein Lhx3 (lhx3) (Xenopus laevis (African clawed frog)).